The primary structure comprises 180 residues: Bifunctional protein PyrR 1 (180 aa).

Residues 39-40 (TR), 103-111 (DDVLFTGRT), arginine 136, and valine 160 contribute to the substrate site. Residues 99–111 (VILVDDVLFTGRT) carry the PRPP-binding motif.

The protein belongs to the purine/pyrimidine phosphoribosyltransferase family. PyrR subfamily. As to quaternary structure, homodimer and homohexamer; in equilibrium.

It carries out the reaction UMP + diphosphate = 5-phospho-alpha-D-ribose 1-diphosphate + uracil. Functionally, regulates transcriptional attenuation of the pyrimidine nucleotide (pyr) operon by binding in a uridine-dependent manner to specific sites on pyr mRNA. This disrupts an antiterminator hairpin in the RNA and favors formation of a downstream transcription terminator, leading to a reduced expression of downstream genes. Also displays a weak uracil phosphoribosyltransferase activity which is not physiologically significant. The sequence is that of Bifunctional protein PyrR 1 (pyrR1) from Lactiplantibacillus plantarum (strain ATCC BAA-793 / NCIMB 8826 / WCFS1) (Lactobacillus plantarum).